The following is a 257-amino-acid chain: NAD-capped RNA hydrolase NudC (257 aa).

Substrate-binding residues include lysine 25 and arginine 69. Cysteine 98 and cysteine 101 together coordinate Zn(2+). Glutamate 111 contributes to the substrate binding site. Residues cysteine 116 and cysteine 119 each contribute to the Zn(2+) site. Tyrosine 124 provides a ligand contact to substrate. The region spanning 125–248 (PQIAPCIIVA…TVARRLIEDT (124 aa)) is the Nudix hydrolase domain. The a divalent metal cation site is built by alanine 158, glutamate 174, and glutamate 178. The Nudix box motif lies at 159–180 (GFVEVGETLEQAVAREVMEESG). 192–199 (QPWPFPQS) contributes to the substrate binding site. Glutamate 219 is an a divalent metal cation binding site. Alanine 241 contributes to the substrate binding site.

Belongs to the Nudix hydrolase family. NudC subfamily. In terms of assembly, homodimer. Mg(2+) is required as a cofactor. Requires Mn(2+) as cofactor. The cofactor is Zn(2+).

The catalysed reaction is a 5'-end NAD(+)-phospho-ribonucleoside in mRNA + H2O = a 5'-end phospho-adenosine-phospho-ribonucleoside in mRNA + beta-nicotinamide D-ribonucleotide + 2 H(+). It carries out the reaction NAD(+) + H2O = beta-nicotinamide D-ribonucleotide + AMP + 2 H(+). It catalyses the reaction NADH + H2O = reduced beta-nicotinamide D-ribonucleotide + AMP + 2 H(+). MRNA decapping enzyme that specifically removes the nicotinamide adenine dinucleotide (NAD) cap from a subset of mRNAs by hydrolyzing the diphosphate linkage to produce nicotinamide mononucleotide (NMN) and 5' monophosphate mRNA. The NAD-cap is present at the 5'-end of some mRNAs and stabilizes RNA against 5'-processing. Has preference for mRNAs with a 5'-end purine. Catalyzes the hydrolysis of a broad range of dinucleotide pyrophosphates. The sequence is that of NAD-capped RNA hydrolase NudC from Shigella flexneri.